A 299-amino-acid polypeptide reads, in one-letter code: Nucleophosmin (299 aa).

The segment covering 125–134 (ESSDDEDEEH) has biased composition (acidic residues). Residues 125 to 247 (ESSDDEDEEH…TPKTPLSSEE (123 aa)) are disordered. The short motif at 153–158 (PRKKTR) is the Nuclear localization signal element. The span at 160 to 187 (EEEEEDSDEDDDDDEDDDDEDDDEEEEE) shows a compositional bias: acidic residues. A compositionally biased stretch (basic and acidic residues) spans 188–197 (TPVKKTDSTK). Positions 189–195 (PVKKTDS) match the Nuclear localization signal motif. 4 consecutive repeats follow at residues 218 to 220 (KTP), 221 to 223 (KTP), 237 to 239 (KTP), and 240 to 242 (KTP). The interval 218–242 (KTPKTPEQKGKQDTKPQTPKTPKTP) is 4 X 3 AA repeats of K-T-P. The span at 221–231 (KTPEQKGKQDT) shows a compositional bias: basic and acidic residues. Positions 232-242 (KPQTPKTPKTP) are enriched in low complexity.

This sequence belongs to the nucleoplasmin family. In terms of assembly, decamer formed by two pentameric rings associated in a head-to-head fashion. In terms of processing, phosphorylated.

The protein resides in the cytoplasm. Its subcellular location is the nucleus. It is found in the nucleoplasm. It localises to the nucleolus. Its function is as follows. Acts as a chaperonin for the core histones H3, H2B and H4. Associated with nucleolar ribonucleoprotein structures and bind single-stranded nucleic acids. It may function in the assembly and/or transport of ribosome. May stimulate endonuclease activity on apurinic/apyrimidinic (AP) double-stranded DNA. May inhibit endonuclease activity on AP single-stranded RNA. The sequence is that of Nucleophosmin (npm1) from Xenopus laevis (African clawed frog).